The sequence spans 497 residues: B3 domain-containing protein REM1 (497 aa).

3 consecutive DNA-binding regions (TF-B3) follow at residues 7-92 (PSLF…SSES), 142-239 (FLRA…LCSH), and 278-379 (FLTQ…HSKI). Positions 87 to 135 (AVSSESDDDESDDTDDSESDDESNDTDDSESDDSEDNGEGDSSLVNKEA) are disordered. Over residues 91 to 125 (ESDDDESDDTDDSESDDESNDTDDSESDDSEDNGE) the composition is skewed to acidic residues.

In terms of tissue distribution, specifically expressed in the reproductive meristem.

The protein localises to the nucleus. In terms of biological role, may play a role in flower development. The chain is B3 domain-containing protein REM1 (REM1) from Brassica oleracea var. botrytis (Cauliflower).